The sequence spans 109 residues: Defensin-B5 (109 aa).

A signal peptide spans 1-20; sequence MRGLLPFLFLLSFFLSPIQA. The tract at residues 21 to 44 is disordered; sequence QPEGREEELEETWSEDRDQAPPRV. Positions 21-70 are excised as a propeptide; it reads QPEGREEELEETWSEDRDQAPPRVVEESEVVGAENEAGLAAGRSYPWIIL. Residues 34-44 show a composition bias toward basic and acidic residues; that stretch reads SEDRDQAPPRV. Cystine bridges form between Cys73-Cys101, Cys80-Cys95, and Cys85-Cys102. A propeptide spanning residues 107-109 is cleaved from the precursor; sequence AVP.

The protein belongs to the beta-defensin family. As to expression, highly expressed in kidney, and expressed at lower levels in testis.

It localises to the secreted. In terms of biological role, has antimicrobial activity. This Ornithorhynchus anatinus (Duckbill platypus) protein is Defensin-B5.